Consider the following 991-residue polypeptide: Translation initiation factor IF-2 (991 aa).

2 disordered regions span residues 126–220 (QADH…DVGE) and 325–359 (VKAA…VDEK). Composition is skewed to polar residues over residues 138 to 160 (QTES…TEPA) and 201 to 210 (PAAQTESAVQ). Over residues 326–340 (KAAGDGDTAPAADDA) the composition is skewed to low complexity. Over residues 343–353 (GKKKPGKKKKK) the composition is skewed to basic residues. The tr-type G domain maps to 488 to 658 (IRPPVVTIMG…LTEAEIRELK (171 aa)). Positions 497-504 (GHVDHGKT) are G1. 497-504 (GHVDHGKT) serves as a coordination point for GTP. Residues 522–526 (GITQH) are G2. The segment at 544-547 (DTPG) is G3. Residues 544 to 548 (DTPGH) and 598 to 601 (NKID) contribute to the GTP site. The G4 stretch occupies residues 598-601 (NKID). The tract at residues 634–636 (SAK) is G5.

This sequence belongs to the TRAFAC class translation factor GTPase superfamily. Classic translation factor GTPase family. IF-2 subfamily.

It localises to the cytoplasm. Functionally, one of the essential components for the initiation of protein synthesis. Protects formylmethionyl-tRNA from spontaneous hydrolysis and promotes its binding to the 30S ribosomal subunits. Also involved in the hydrolysis of GTP during the formation of the 70S ribosomal complex. The sequence is that of Translation initiation factor IF-2 from Chlorobium phaeobacteroides (strain DSM 266 / SMG 266 / 2430).